Consider the following 456-residue polypeptide: Glycerol-3-phosphate acyltransferase 4 (456 aa).

The N-terminal stretch at 1–37 (MFLLLPFDSLIVNLLGISLTVLFTLLLVFIIVPAIFG) is a signal peptide. 2 helical membrane passes run 156-176 (ISLR…CFLL) and 180-200 (IALA…VGYL). An N-linked (GlcNAc...) asparagine glycan is attached at N247. An HXXXXD motif motif is present at residues 248–253 (HTSPID). 3 N-linked (GlcNAc...) asparagine glycosylation sites follow: N327, N328, and N362.

It belongs to the 1-acyl-sn-glycerol-3-phosphate acyltransferase family.

It is found in the endoplasmic reticulum membrane. It carries out the reaction sn-glycerol 3-phosphate + an acyl-CoA = a 1-acyl-sn-glycero-3-phosphate + CoA. The catalysed reaction is dodecanoyl-CoA + sn-glycerol 3-phosphate = 1-dodecanoyl-sn-glycerol 3-phosphate + CoA. It catalyses the reaction sn-glycerol 3-phosphate + hexadecanoyl-CoA = 1-hexadecanoyl-sn-glycero-3-phosphate + CoA. The enzyme catalyses sn-glycerol 3-phosphate + octadecanoyl-CoA = 1-octadecanoyl-sn-glycero-3-phosphate + CoA. It carries out the reaction sn-glycerol 3-phosphate + (9Z)-octadecenoyl-CoA = 1-(9Z-octadecenoyl)-sn-glycero-3-phosphate + CoA. The catalysed reaction is (9Z,12Z)-octadecadienoyl-CoA + sn-glycerol 3-phosphate = 1-(9Z,12Z)-octadecadienoyl-sn-glycero-3-phosphate + CoA. The protein operates within phospholipid metabolism; CDP-diacylglycerol biosynthesis; CDP-diacylglycerol from sn-glycerol 3-phosphate: step 1/3. Converts glycerol-3-phosphate to 1-acyl-sn-glycerol-3-phosphate (lysophosphatidic acid or LPA) by incorporating an acyl moiety at the sn-1 position of the glycerol backbone. Active against both saturated and unsaturated long-chain fatty acyl-CoAs. Protects cells against lipotoxicity. This Pongo abelii (Sumatran orangutan) protein is Glycerol-3-phosphate acyltransferase 4.